The primary structure comprises 655 residues: MANPASYRPKTGEIPTDPGVYRFRDEHGRVIYVGKAKNLRSRLTSYFANPVTLLPKTFAMVHTATSVQWTIVGSELEALQLEYTWIKEFAPRYNLAFRDDKSYPYLAVTMGEEFPRVQVMRGERRKGTRYFGPFTAGAIRETVDTLLRVFPVRTCSPSTFKRAQQSGRPCLLGYIDKCAVPCVGRVSAEEHRTLADEFCAFMGGEAKRFIGTLEKQMAEAVAELDYERAARLRDDVIALRKVFERNAVVLAEDTSADIFAVHQDELEAAVQVFNVRSGRIRGQRGWVVEKVEDLVPAELIEHLLQQVYGDERADEDRIPRQILVPELPANVEQLTEWLSGLRGAKVEIKVPQRGDKAALMETVALNAEQAMKLHKSKRAGDLTQRSLALRELQDALDLPLPLLRIECYDISHVQGTNVVASMVVVEDGIAKKSEYRRFSITGDAARDDTASMYDVITRRFRNYLQEQQDRAEALTRPVEFEISDAAETAPKSKFAYPPNLVVVDGGPPQVAATSRALADLGITDVAVIGLAKRLEEVWLPEDDFPVILPRTSQGLYLLQRIRDEAHRFAISFHRQKRGKSMTASLLDGVPGLGESKQKALLKHFGSVKKLQSADVSQISEVKGIGPVLAEAVRSALESVDAQPAINMATGEILES.

A GIY-YIG domain is found at 16-95; it reads TDPGVYRFRD…IKEFAPRYNL (80 aa). A UVR domain is found at 207–242; sequence KRFIGTLEKQMAEAVAELDYERAARLRDDVIALRKV.

The protein belongs to the UvrC family. Interacts with UvrB in an incision complex.

The protein resides in the cytoplasm. In terms of biological role, the UvrABC repair system catalyzes the recognition and processing of DNA lesions. UvrC both incises the 5' and 3' sides of the lesion. The N-terminal half is responsible for the 3' incision and the C-terminal half is responsible for the 5' incision. The sequence is that of UvrABC system protein C from Renibacterium salmoninarum (strain ATCC 33209 / DSM 20767 / JCM 11484 / NBRC 15589 / NCIMB 2235).